We begin with the raw amino-acid sequence, 281 residues long: Nucleotide-binding protein Daro_0070 (281 aa).

8 to 15 contributes to the ATP binding site; sequence GLSGSGKS. A GTP-binding site is contributed by 57 to 60; sequence DARS.

It belongs to the RapZ-like family.

Displays ATPase and GTPase activities. The polypeptide is Nucleotide-binding protein Daro_0070 (Dechloromonas aromatica (strain RCB)).